The chain runs to 63 residues: UPF0337 protein SERP0494 (63 aa).

The segment at 1-46 (MAEDKFEQAKGNIKETVGNATDNKELEKDGKGDKASGKAKEAVENV) is disordered. The segment covering 22–46 (DNKELEKDGKGDKASGKAKEAVENV) has biased composition (basic and acidic residues).

Belongs to the UPF0337 (CsbD) family.

The sequence is that of UPF0337 protein SERP0494 from Staphylococcus epidermidis (strain ATCC 35984 / DSM 28319 / BCRC 17069 / CCUG 31568 / BM 3577 / RP62A).